The primary structure comprises 70 residues: Large ribosomal subunit protein bL31 (70 aa).

Cysteine 16, cysteine 18, cysteine 38, and cysteine 41 together coordinate Zn(2+).

It belongs to the bacterial ribosomal protein bL31 family. Type A subfamily. Part of the 50S ribosomal subunit. The cofactor is Zn(2+).

Its function is as follows. Binds the 23S rRNA. This Vesicomyosocius okutanii subsp. Calyptogena okutanii (strain HA) protein is Large ribosomal subunit protein bL31.